The sequence spans 428 residues: Autophagy-related protein 14 (428 aa).

A coiled-coil region spans residues 82–143 (QEAIDRTAEI…RKKQLDKVKD (62 aa)).

Belongs to the ATG14 family. Component of the autophagy-specific VPS34 PI3-kinase complex I.

It is found in the preautophagosomal structure membrane. Its subcellular location is the vacuole membrane. Its function is as follows. Required for cytoplasm to vacuole transport (Cvt) and autophagy as a part of the autophagy-specific VPS34 PI3-kinase complex I. This complex is essential to recruit the ATG8-phosphatidylinositol conjugate and the ATG12-ATG5 conjugate to the pre-autophagosomal structure. ATG14 mediates the specific binding of the VPS34 PI3-kinase complex I to the preautophagosomal structure (PAS). Plays a crucial role in hyphal development, conidiogenesis and pathogenicity. Also required for glycogen mobilization, quantity of lipid bodies, and the turgor pressure of appressoria. The chain is Autophagy-related protein 14 from Pyricularia oryzae (strain 70-15 / ATCC MYA-4617 / FGSC 8958) (Rice blast fungus).